We begin with the raw amino-acid sequence, 462 residues long: Chromosomal replication initiator protein DnaA (462 aa).

The segment at 1–83 is domain I, interacts with DnaA modulators; that stretch reads MSLSLWQQCL…LRFEVGSKPA (83 aa). The tract at residues 83–125 is domain II; it reads AVRAHSHPVTASVSAPVAPVTRSAPVRPSWDSSPAQPELSYRS. The segment at 105-127 is disordered; it reads SAPVRPSWDSSPAQPELSYRSNV. Positions 112–127 are enriched in polar residues; that stretch reads WDSSPAQPELSYRSNV. The domain III, AAA+ region stretch occupies residues 126–342; it reads NVNPKHTFDN…GALNRVIANA (217 aa). ATP contacts are provided by G170, G172, K173, and T174. Residues 343 to 462 are domain IV, binds dsDNA; the sequence is NFTGRAITID…FSNLIRTLSS (120 aa).

The protein belongs to the DnaA family. As to quaternary structure, oligomerizes as a right-handed, spiral filament on DNA at oriC.

It localises to the cytoplasm. Its function is as follows. Plays an essential role in the initiation and regulation of chromosomal replication. ATP-DnaA binds to the origin of replication (oriC) to initiate formation of the DNA replication initiation complex once per cell cycle. Binds the DnaA box (a 9 base pair repeat at the origin) and separates the double-stranded (ds)DNA. Forms a right-handed helical filament on oriC DNA; dsDNA binds to the exterior of the filament while single-stranded (ss)DNA is stabiized in the filament's interior. The ATP-DnaA-oriC complex binds and stabilizes one strand of the AT-rich DNA unwinding element (DUE), permitting loading of DNA polymerase. After initiation quickly degrades to an ADP-DnaA complex that is not apt for DNA replication. Binds acidic phospholipids. This chain is Chromosomal replication initiator protein DnaA, found in Yersinia enterocolitica serotype O:8 / biotype 1B (strain NCTC 13174 / 8081).